A 37-amino-acid chain; its full sequence is Large ribosomal subunit protein bL36c (37 aa).

Belongs to the bacterial ribosomal protein bL36 family.

Its subcellular location is the plastid. It is found in the chloroplast. The protein is Large ribosomal subunit protein bL36c of Lactuca sativa (Garden lettuce).